Reading from the N-terminus, the 321-residue chain is Glucokinase (321 aa).

8-13 (GDVGGT) serves as a coordination point for ATP.

This sequence belongs to the bacterial glucokinase family.

Its subcellular location is the cytoplasm. The catalysed reaction is D-glucose + ATP = D-glucose 6-phosphate + ADP + H(+). The polypeptide is Glucokinase (Salmonella schwarzengrund (strain CVM19633)).